The primary structure comprises 636 residues: Signal recognition particle receptor subunit alpha (636 aa).

3 disordered regions span residues 132–205, 217–246, and 280–314; these read APTT…ELSK, IQKH…APRV, and IRGT…TKGT. Basic and acidic residues-rich tracts occupy residues 137 to 146 and 153 to 165; these read KKFEDSEKAK and IETR…EKAK. A Phosphoserine modification is found at serine 177. Positions 217-238 are enriched in basic and acidic residues; sequence IQKHGKGLDKSSKSTKSDTPKE. The residue at position 283 (threonine 283) is a Phosphothreonine. Serine 295, serine 296, and serine 297 each carry phosphoserine. A compositionally biased stretch (polar residues) spans 302–312; it reads ATQNTKPSATK. Residue threonine 303 is modified to Phosphothreonine. Positions 417–634 are NG domain; it reads YVVTFCGVNG…NAKAVVAALM (218 aa). Residues 423 to 430 and 518 to 522 contribute to the GTP site; these read GVNGVGKS and DTAGR. Threonine 576 is subject to Phosphothreonine. 586 to 589 lines the GTP pocket; it reads TKFD.

Belongs to the GTP-binding SRP family. Heterodimer with SRPRB. Interacts with the signal recognition particle (SRP) complex subunit SRP54.

The protein resides in the endoplasmic reticulum membrane. Functionally, component of the SRP (signal recognition particle) receptor. Ensures, in conjunction with the signal recognition particle, the correct targeting of the nascent secretory proteins to the endoplasmic reticulum membrane system. Forms a guanosine 5'-triphosphate (GTP)-dependent complex with the SRP subunit SRP54. SRP receptor compaction and GTPase rearrangement drive SRP-mediated cotranslational protein translocation into the ER. The protein is Signal recognition particle receptor subunit alpha of Mus musculus (Mouse).